Here is a 310-residue protein sequence, read N- to C-terminus: Olfactory receptor 5T7 (310 aa).

Topologically, residues 1–23 (MENITEVTEFILMGFTDNADLEI) are extracellular. A glycan (N-linked (GlcNAc...) asparagine) is linked at Asn-3. Residues 24–44 (LSFFLFLAIYLFTLMGNLGLI) traverse the membrane as a helical segment. Residues 45 to 52 (TLVIGDSR) are Cytoplasmic-facing. A helical membrane pass occupies residues 53–73 (LHNPMYYFLSVLSSVDACYST). The Extracellular segment spans residues 74 to 97 (VITPQMVVDFVSEKKVISFIGCAT). A disulfide bridge links Cys-95 with Cys-187. The helical transmembrane segment at 98–118 (QMFLAVTFGTTECFLLAAMAY) threads the bilayer. The Cytoplasmic portion of the chain corresponds to 119-131 (DRYVAIHNPLMYV). The chain crosses the membrane as a helical span at residues 132–152 (VSMSPRVYVPLIIASYAGGIL). The Extracellular segment spans residues 153–194 (HAVIHTVATFRLSFCGSNKISHIFCDIPPLLAISCSDTHFNQ). Residues 195-215 (LLLFYCAGFIEVVTILIVLLS) form a helical membrane-spanning segment. Residues 216–235 (YGFILSVILKTRSTEGKRKV) lie on the Cytoplasmic side of the membrane. A helical transmembrane segment spans residues 236 to 256 (FSTCGSHLMAVSTFHGTVLFM). The Extracellular segment spans residues 257-269 (YVRPSDSYALEHD). The chain crosses the membrane as a helical span at residues 270-290 (MMVSIFYSIVIPMLNPLIYSL). Over 291-310 (RNKDVKEAIKKVFGKRILCG) the chain is Cytoplasmic.

It belongs to the G-protein coupled receptor 1 family.

It localises to the cell membrane. Its function is as follows. Potential odorant receptor. This is Olfactory receptor 5T7 from Mus musculus (Mouse).